The sequence spans 147 residues: uncharacterized protein (147 aa).

The HTH marR-type domain occupies 1 to 137 (MRDNTIGSLI…LYELMTKVHK (137 aa)). Positions 53–76 (QMELAEKVTVTQGGISRMLTRLEK) form a DNA-binding region, H-T-H motif.

This is an uncharacterized protein from Bacillus thuringiensis subsp. konkukian (strain 97-27).